The chain runs to 423 residues: Probable sodium/metabolite cotransporter BASS3, chloroplastic (423 aa).

The N-terminal 45 residues, 1–45 (MAAAVAASSSSSSSSCAAVGVATASHPHRHRQARFVVSPPAPASP), are a transit peptide targeting the chloroplast. Helical transmembrane passes span 106 to 126 (ALLP…PATF), 138 to 158 (LGGI…ALAF), 165 to 187 (TIGY…RAFG), 192 to 214 (FFAG…ASFL), 231 to 251 (ISSV…VVPV), 254 to 274 (IAMA…GLLL), 287 to 307 (PVMP…PLAI), 318 to 338 (FLLL…GYWI), and 380 to 400 (VPAA…ASYW).

It belongs to the bile acid:sodium symporter (BASS) (TC 2.A.28) family.

The protein resides in the membrane. It localises to the plastid. The protein localises to the chloroplast envelope. Its function is as follows. May function as sodium-coupled metabolite transporter across the chloroplast envelope. This chain is Probable sodium/metabolite cotransporter BASS3, chloroplastic (BASS3), found in Oryza sativa subsp. japonica (Rice).